The sequence spans 874 residues: MTKDKNSPGLKKKSQSVDINAPGFNPLAGAGKQTPQASKPPAPKTPIIEEEQNNAANTQKHPSRRSELKRFYTIDTGQKKTLDKKDGRRMSFQKPKGTIEYTVESRDSLNSIALKFDTTPNELVQLNKLFSRAVVTGQVLYVPDPEYVSSVESSPSLSPVSPLSPTSSEAEFDKTTNPDVHPTEATPSSTFTGIRPARVVSSTSEEEEAFTEKFLKINCKYITSGKGTVSGVLLVTPNNIMFDPHKNDPLVQENGCEEYGIMCPMEEVMSAAMYKEILDSKIKESLPIDIDQLSGRDFCHSKKMTGSNTEEIDSRIRDAGNDSASTAPRSTEESLSEDVFTESELSPIREELVSSDELRQDKSSGASSESVQTVNQAEVESLTVKSESTGTPGHLRSDTEHSTNEVGTLCHKTDLNNLEMAIKEDQIADNFQGISGPKEDSTSIKGNSDQDSFLHENSLHQEESQKENMPCGETAEFKQKQSVNKGKQGKEQNQDSQTEAEELRKLWKTHTMQQTKQQRENIQQVSQKEAKHKITSADGHIESSALLKEKQRHRLHKFLCLRVGKPMRKTFVSQASATMQQYAQRDKKHEYWFAVPQERTDHLYAFFIQWSPEIYAEDTGEYTREPGFIVVKKIEESETIEDSSNQAAAREWEVVSVAEYHRRIDALNTEELRTLCRRLQITTREDINSKQVATVKADLESESFRPNLSDPSELLLPDQIEKLTKHLPPRTIGYPWTLVYGTGKHGTSLKTLYRTMTGLDTPVLMVIKDSDGQVFGALASEPLKVSDGFYGTGETFVFTFCPEFEVFKWTGDNMFFIKGDMDSLAFGGGGGEFALWLDGDLYHGRSHSCKTFGNRTLSKKEDFFIQDIEIWAFE.

The interval 1 to 89 (MTKDKNSPGL…KTLDKKDGRR (89 aa)) is disordered. Residues 64-89 (RRSELKRFYTIDTGQKKTLDKKDGRR) are compositionally biased toward basic and acidic residues. A Phosphoserine modification is found at S91. Positions 99-142 (IEYTVESRDSLNSIALKFDTTPNELVQLNKLFSRAVVTGQVLYV) constitute a LysM domain. Position 119 is a phosphothreonine (T119). A compositionally biased stretch (low complexity) spans 151–169 (VESSPSLSPVSPLSPTSSE). A disordered region spans residues 151 to 194 (VESSPSLSPVSPLSPTSSEAEFDKTTNPDVHPTEATPSSTFTGI). Phosphoserine is present on residues S201, S202, and S204. In terms of domain architecture, GRAM spans 208 to 275 (EAFTEKFLKI…EEVMSAAMYK (68 aa)). Phosphoserine occurs at positions 294, 334, and 336. Disordered regions lie at residues 299–406 (CHSK…TNEV) and 431–537 (FQGI…ITSA). Phosphothreonine is present on T341. Residue S346 is modified to Phosphoserine. Over residues 347 to 362 (PIREELVSSDELRQDK) the composition is skewed to basic and acidic residues. Polar residues predominate over residues 363–391 (SSGASSESVQTVNQAEVESLTVKSESTGT). A compositionally biased stretch (basic and acidic residues) spans 452–466 (SFLHENSLHQEESQK). S496 is modified (phosphoserine). Residues 510-527 (HTMQQTKQQRENIQQVSQ) show a composition bias toward polar residues. Residues 551–578 (QRHRLHKFLCLRVGKPMRKTFVSQASAT) are mediates oxidative antimutator activity. A TLDc domain is found at 713–874 (ELLLPDQIEK…IQDIEIWAFE (162 aa)).

The protein belongs to the OXR1 family.

It localises to the mitochondrion. Its function is as follows. May be involved in protection from oxidative damage. This is Oxidation resistance protein 1 (OXR1) from Homo sapiens (Human).